Here is a 197-residue protein sequence, read N- to C-terminus: Ribonuclease HII (197 aa).

Positions 3–192 (QLIAGVDEVG…VQLSLMQRGG (190 aa)) constitute an RNase H type-2 domain. Residues Asp9, Glu10, and Asp101 each contribute to the a divalent metal cation site.

This sequence belongs to the RNase HII family. Requires Mn(2+) as cofactor. The cofactor is Mg(2+).

Its subcellular location is the cytoplasm. It carries out the reaction Endonucleolytic cleavage to 5'-phosphomonoester.. Endonuclease that specifically degrades the RNA of RNA-DNA hybrids. This chain is Ribonuclease HII, found in Pseudoalteromonas atlantica (strain T6c / ATCC BAA-1087).